The following is a 25-amino-acid chain: Tubulin alpha chain (25 aa).

Glutamine 11 is a GTP binding site.

The protein belongs to the tubulin family. Dimer of alpha and beta chains. A typical microtubule is a hollow water-filled tube with an outer diameter of 25 nm and an inner diameter of 15 nM. Alpha-beta heterodimers associate head-to-tail to form protofilaments running lengthwise along the microtubule wall with the beta-tubulin subunit facing the microtubule plus end conferring a structural polarity. Microtubules usually have 13 protofilaments but different protofilament numbers can be found in some organisms and specialized cells. Mg(2+) is required as a cofactor.

The protein localises to the cytoplasm. It localises to the cytoskeleton. It catalyses the reaction GTP + H2O = GDP + phosphate + H(+). Tubulin is the major constituent of microtubules, a cylinder consisting of laterally associated linear protofilaments composed of alpha- and beta-tubulin heterodimers. Microtubules grow by the addition of GTP-tubulin dimers to the microtubule end, where a stabilizing cap forms. Below the cap, tubulin dimers are in GDP-bound state, owing to GTPase activity of alpha-tubulin. This chain is Tubulin alpha chain, found in Leptomonas seymouri.